The sequence spans 198 residues: Charged multivesicular body protein 1a (198 aa).

2 coiled-coil regions span residues 7-41 (QLKFTSKQLERLAKKAEKDSKSEQAKVKKALQQKN) and 176-198 (GETSARAQEKEDQLSRRLAALRN). The tract at residues 171 to 198 (GASALGETSARAQEKEDQLSRRLAALRN) is disordered. The MIT-interacting motif signature appears at 187 to 197 (DQLSRRLAALR).

This sequence belongs to the SNF7 family. Probable peripherally associated component of the endosomal sorting required for transport complex III (ESCRT-III).

Its subcellular location is the cytoplasm. It localises to the endosome membrane. Probable peripherally associated component of the endosomal sorting required for transport complex III (ESCRT-III) which is involved in multivesicular bodies (MVBs) formation and sorting of endosomal cargo proteins into MVBs. MVBs contain intraluminal vesicles (ILVs) that are generated by invagination and scission from the limiting membrane of the endosome and mostly are delivered to lysosomes enabling degradation of membrane proteins, such as stimulated growth factor receptors, lysosomal enzymes and lipids. The polypeptide is Charged multivesicular body protein 1a (chmp1a) (Danio rerio (Zebrafish)).